The following is a 540-amino-acid chain: Bifunctional ribokinase/ribose-5-phosphate isomerase A (540 aa).

The interval 1–308 (MKKIIVVGST…AILNVINQDQ (308 aa)) is ribokinase. Substrate is bound by residues 11 to 13 (NVD), 39 to 44 (GGKGAN), and Glu141. Residues Asn185 and 221-226 (TVGGRG) each bind ATP. Asp247 and Thr249 together coordinate K(+). Residue 252–253 (GD) coordinates ATP. Asp253 contacts substrate. The Proton acceptor; for ribokinase activity role is filled by Asp253. The K(+) site is built by Thr284, Val287, Gly289, and Ser293. Residues 309–540 (MTKTEIEKQK…IKTIKRSDLS (232 aa)) are ribose-5-phosphate isomerase A. Substrate-binding positions include 339 to 342 (SGTT), 395 to 398 (DGAD), and 408 to 411 (KGGG). The active-site Proton acceptor; for ribose-5-phosphate isomerase activity is Glu417. Substrate is bound at residue Lys435.

This sequence in the N-terminal section; belongs to the carbohydrate kinase PfkB family. Ribokinase subfamily. The protein in the C-terminal section; belongs to the ribose 5-phosphate isomerase family. The cofactor is Mg(2+).

It is found in the cytoplasm. The enzyme catalyses D-ribose + ATP = D-ribose 5-phosphate + ADP + H(+). It catalyses the reaction aldehydo-D-ribose 5-phosphate = D-ribulose 5-phosphate. Its pathway is carbohydrate metabolism; D-ribose degradation; D-ribose 5-phosphate from beta-D-ribopyranose: step 2/2. It participates in carbohydrate degradation; pentose phosphate pathway; D-ribose 5-phosphate from D-ribulose 5-phosphate (non-oxidative stage): step 1/1. Activated by a monovalent cation that binds near, but not in, the active site. The most likely occupant of the site in vivo is potassium. Also activated by ammonium ion. Ion binding induces a conformational change that may alter substrate affinity. Functionally, bifunctional enzyme that catalyzes the phosphorylation of ribose at O-5 in a reaction requiring ATP and magnesium, and the reversible conversion of ribose 5-phosphate to ribulose 5-phosphate. This Fructilactobacillus sanfranciscensis (strain ATCC 27651 / DSM 20451 / JCM 5668 / CCUG 30143 / KCTC 3205 / NCIMB 702811 / NRRL B-3934 / L-12) (Lactobacillus sanfranciscensis) protein is Bifunctional ribokinase/ribose-5-phosphate isomerase A (rbsK/rbiA).